A 203-amino-acid chain; its full sequence is Proteasome subunit beta 1 (203 aa).

Residues 1 to 7 constitute a propeptide, removed in mature form; by autocatalysis; the sequence is MAEKLKG. Thr-8 functions as the Nucleophile in the catalytic mechanism.

Belongs to the peptidase T1B family. In terms of assembly, the 20S proteasome core is composed of 14 alpha and 14 beta subunits that assemble into four stacked heptameric rings, resulting in a barrel-shaped structure. The two inner rings, each composed of seven catalytic beta subunits, are sandwiched by two outer rings, each composed of seven alpha subunits. The catalytic chamber with the active sites is on the inside of the barrel. Has a gated structure, the ends of the cylinder being occluded by the N-termini of the alpha-subunits. Is capped at one or both ends by the proteasome regulatory ATPase, PAN.

The protein resides in the cytoplasm. It catalyses the reaction Cleavage of peptide bonds with very broad specificity.. The formation of the proteasomal ATPase PAN-20S proteasome complex, via the docking of the C-termini of PAN into the intersubunit pockets in the alpha-rings, triggers opening of the gate for substrate entry. Interconversion between the open-gate and close-gate conformations leads to a dynamic regulation of the 20S proteasome proteolysis activity. Its function is as follows. Component of the proteasome core, a large protease complex with broad specificity involved in protein degradation. This chain is Proteasome subunit beta 1, found in Thermococcus onnurineus (strain NA1).